The sequence spans 298 residues: ATP phosphoribosyltransferase (298 aa).

This sequence belongs to the ATP phosphoribosyltransferase family. Long subfamily. Mg(2+) serves as cofactor.

The protein localises to the cytoplasm. The enzyme catalyses 1-(5-phospho-beta-D-ribosyl)-ATP + diphosphate = 5-phospho-alpha-D-ribose 1-diphosphate + ATP. Its pathway is amino-acid biosynthesis; L-histidine biosynthesis; L-histidine from 5-phospho-alpha-D-ribose 1-diphosphate: step 1/9. Its activity is regulated as follows. Feedback inhibited by histidine. Its function is as follows. Catalyzes the condensation of ATP and 5-phosphoribose 1-diphosphate to form N'-(5'-phosphoribosyl)-ATP (PR-ATP). Has a crucial role in the pathway because the rate of histidine biosynthesis seems to be controlled primarily by regulation of HisG enzymatic activity. The polypeptide is ATP phosphoribosyltransferase (Vibrio parahaemolyticus serotype O3:K6 (strain RIMD 2210633)).